The sequence spans 140 residues: Nucleoside diphosphate kinase (140 aa).

Positions 11, 59, 87, 93, 104, and 114 each coordinate ATP. The active-site Pros-phosphohistidine intermediate is the His117.

The protein belongs to the NDK family. In terms of assembly, homotetramer. Requires Mg(2+) as cofactor.

The protein localises to the cytoplasm. It carries out the reaction a 2'-deoxyribonucleoside 5'-diphosphate + ATP = a 2'-deoxyribonucleoside 5'-triphosphate + ADP. It catalyses the reaction a ribonucleoside 5'-diphosphate + ATP = a ribonucleoside 5'-triphosphate + ADP. Major role in the synthesis of nucleoside triphosphates other than ATP. The ATP gamma phosphate is transferred to the NDP beta phosphate via a ping-pong mechanism, using a phosphorylated active-site intermediate. This chain is Nucleoside diphosphate kinase, found in Rickettsia akari (strain Hartford).